The sequence spans 341 residues: Ferredoxin--NADP reductase 2 (341 aa).

FAD-binding residues include D42, Q50, Y55, I95, F129, D294, and S335.

This sequence belongs to the ferredoxin--NADP reductase type 2 family. As to quaternary structure, homodimer. The cofactor is FAD.

It carries out the reaction 2 reduced [2Fe-2S]-[ferredoxin] + NADP(+) + H(+) = 2 oxidized [2Fe-2S]-[ferredoxin] + NADPH. In Chloroherpeton thalassium (strain ATCC 35110 / GB-78), this protein is Ferredoxin--NADP reductase 2.